Reading from the N-terminus, the 146-residue chain is Ribonuclease H (146 aa).

The RNase H type-1 domain occupies 1–143 (MKKRVTIYTD…CDELARQAIK (143 aa)). Mg(2+) contacts are provided by Asp10, Glu48, Asp70, and Asp135.

It belongs to the RNase H family. Monomer. It depends on Mg(2+) as a cofactor.

The protein resides in the cytoplasm. The enzyme catalyses Endonucleolytic cleavage to 5'-phosphomonoester.. In terms of biological role, endonuclease that specifically degrades the RNA of RNA-DNA hybrids. This Chlorobium limicola (strain DSM 245 / NBRC 103803 / 6330) protein is Ribonuclease H.